A 222-amino-acid polypeptide reads, in one-letter code: Glutathione S-transferase A2 (222 aa).

At Ala-2 the chain carries N-acetylalanine. In terms of domain architecture, GST N-terminal spans 3–83 (GKPVLHYFNA…YIATKYDLYG (81 aa)). Lys-4 carries the N6-succinyllysine modification. Glutathione-binding positions include Tyr-9, Lys-45, 54-55 (QV), and 67-68 (QT). In terms of domain architecture, GST C-terminal spans 85 to 208 (DMKERALIDM…HPGSQRKPPL (124 aa)).

This sequence belongs to the GST superfamily. Alpha family. As to quaternary structure, homodimer. Heterodimer of GSTA1 and GSTA2. In terms of tissue distribution, expressed in the kidney.

It catalyses the reaction RX + glutathione = an S-substituted glutathione + a halide anion + H(+). In terms of biological role, catalyzes the conjugation of glutathione to a large variety of electrophilic compounds. The polypeptide is Glutathione S-transferase A2 (Gsta2) (Mus musculus (Mouse)).